A 411-amino-acid chain; its full sequence is Adenylosuccinate synthetase (411 aa).

Residues 11–17 and 39–41 each bind GTP; these read GDEGKGK and GHT. The active-site Proton acceptor is the aspartate 12. Mg(2+)-binding residues include aspartate 12 and glycine 39. Residues 12–15, 37–40, threonine 121, arginine 135, glutamine 215, threonine 230, and arginine 294 each bind IMP; these read DEGK and NAGH. Histidine 40 functions as the Proton donor in the catalytic mechanism. 290–296 is a binding site for substrate; the sequence is TTTKRPR. Residues arginine 296, 322–324, and 400–402 each bind GTP; these read KLD and STS.

The protein belongs to the adenylosuccinate synthetase family. As to quaternary structure, homodimer. Mg(2+) is required as a cofactor.

The protein resides in the cytoplasm. The enzyme catalyses IMP + L-aspartate + GTP = N(6)-(1,2-dicarboxyethyl)-AMP + GDP + phosphate + 2 H(+). It functions in the pathway purine metabolism; AMP biosynthesis via de novo pathway; AMP from IMP: step 1/2. In terms of biological role, plays an important role in the de novo pathway of purine nucleotide biosynthesis. Catalyzes the first committed step in the biosynthesis of AMP from IMP. The sequence is that of Adenylosuccinate synthetase from Helicobacter pylori (strain Shi470).